We begin with the raw amino-acid sequence, 80 residues long: Large ribosomal subunit protein uL24 (80 aa).

It belongs to the universal ribosomal protein uL24 family. Part of the 50S ribosomal subunit.

In terms of biological role, one of two assembly initiator proteins, it binds directly to the 5'-end of the 23S rRNA, where it nucleates assembly of the 50S subunit. Functionally, one of the proteins that surrounds the polypeptide exit tunnel on the outside of the subunit. This is Large ribosomal subunit protein uL24 from Prosthecochloris aestuarii (strain DSM 271 / SK 413).